The primary structure comprises 570 residues: Periplasmic trehalase (570 aa).

A signal peptide spans 1–34 (MIPPEIRRSVLLQKAIKLALAGTLLTFASFSATA). Substrate contacts are provided by residues R159, 166-167 (WD), N203, 212-214 (RSQ), 284-286 (RPE), and G317. Residues D319 and E503 each act as proton donor/acceptor in the active site. E518 lines the substrate pocket. The interval 544–570 (KPCDSVPSTRPASLSATPTKTPSAATQ) is disordered. A compositionally biased stretch (low complexity) spans 554–570 (PASLSATPTKTPSAATQ).

The protein belongs to the glycosyl hydrolase 37 family. In terms of assembly, monomer.

Its subcellular location is the periplasm. The catalysed reaction is alpha,alpha-trehalose + H2O = alpha-D-glucose + beta-D-glucose. Provides the cells with the ability to utilize trehalose at high osmolarity by splitting it into glucose molecules that can subsequently be taken up by the phosphotransferase-mediated uptake system. The sequence is that of Periplasmic trehalase from Salmonella newport (strain SL254).